A 604-amino-acid polypeptide reads, in one-letter code: Ribosome-inactivating protein PMRIPm (604 aa).

The N-terminal stretch at methionine 1–glutamine 43 is a signal peptide. The active site involves glutamate 211. 3 disulfides stabilise this stretch: cysteine 301–cysteine 332, cysteine 348–cysteine 367, and cysteine 392–cysteine 409. 2 Ricin B-type lectin domains span residues glycine 335–glycine 463 and valine 466–valine 598. The stretch at alanine 345 to serine 387 is one 1-alpha repeat. Residues leucine 389 to asparagine 429 form a 1-beta repeat. The stretch at serine 432 to aspartate 465 is one 1-gamma repeat. A 2-alpha repeat occupies glutamine 477–alanine 521. A disulfide bond links cysteine 480 and cysteine 502. The N-linked (GlcNAc...) asparagine glycan is linked to asparagine 490. The 2-beta repeat unit spans residues arginine 525–asparagine 563. The stretch at alanine 566–threonine 599 is one 2-gamma repeat.

It belongs to the ribosome-inactivating protein family. Type 2 RIP subfamily. In terms of assembly, disulfide-linked dimer of A and B chains. In terms of processing, the precursor is processed in two chains, A and B, that are linked by a disulfide bond. Glycosylated. Post-translationally, the N-terminus is blocked. In terms of tissue distribution, expressed in rhizome and abundantly in leaves (at protein level).

It carries out the reaction Endohydrolysis of the N-glycosidic bond at one specific adenosine on the 28S rRNA.. With respect to regulation, strongly inhibited by asialofetuin and asialomucin. In terms of biological role, gal/GalNAc-specific agglutinin. Behaves as a type-2 ribosome-inactivating protein. Inhibits mammalian ribosomes. The A chain is responsible for inhibiting protein synthesis through the catalytic inactivation of 60S ribosomal subunits by removing adenine from position 4,324 of 28S rRNA. The B chain binds to cell receptors and probably facilitates the entry into the cell of the A chain; B chains are also responsible for cell agglutination (lectin activity). Involved in plant defense against insects. Has very low cytotoxic activity against the human tumor cell line Molt4, but higher against CEM. In Polygonatum multiflorum (Solomon's seal), this protein is Ribosome-inactivating protein PMRIPm.